The primary structure comprises 956 residues: Bifunctional glutamine synthetase adenylyltransferase/adenylyl-removing enzyme (956 aa).

The adenylyl removase stretch occupies residues methionine 1–serine 441. The tract at residues histidine 450–glutamate 956 is adenylyl transferase.

It belongs to the GlnE family. Mg(2+) serves as cofactor.

It carries out the reaction [glutamine synthetase]-O(4)-(5'-adenylyl)-L-tyrosine + phosphate = [glutamine synthetase]-L-tyrosine + ADP. The catalysed reaction is [glutamine synthetase]-L-tyrosine + ATP = [glutamine synthetase]-O(4)-(5'-adenylyl)-L-tyrosine + diphosphate. Involved in the regulation of glutamine synthetase GlnA, a key enzyme in the process to assimilate ammonia. When cellular nitrogen levels are high, the C-terminal adenylyl transferase (AT) inactivates GlnA by covalent transfer of an adenylyl group from ATP to specific tyrosine residue of GlnA, thus reducing its activity. Conversely, when nitrogen levels are low, the N-terminal adenylyl removase (AR) activates GlnA by removing the adenylyl group by phosphorolysis, increasing its activity. The regulatory region of GlnE binds the signal transduction protein PII (GlnB) which indicates the nitrogen status of the cell. The protein is Bifunctional glutamine synthetase adenylyltransferase/adenylyl-removing enzyme of Photorhabdus laumondii subsp. laumondii (strain DSM 15139 / CIP 105565 / TT01) (Photorhabdus luminescens subsp. laumondii).